Reading from the N-terminus, the 208-residue chain is CASP-like protein 2A1 (208 aa).

Topologically, residues 1–36 are cytoplasmic; it reads MSKMAEQKAAAVDGLGGAGAADAAPAGEAAAARVRP. The helical transmembrane segment at 37 to 57 threads the bilayer; it reads VETLLRAAPLGLCVAAMTVML. The Extracellular portion of the chain corresponds to 58 to 78; sequence RDQQSNEYGTVAYSDLGGFKY. A helical membrane pass occupies residues 79–99; that stretch reads LVYANGLCAAYSLVSAFYTAV. At 100 to 108 the chain is on the cytoplasmic side; sequence PRPATVSRS. The chain crosses the membrane as a helical span at residues 109–129; the sequence is WVVFLLDQVFTYLILAAGAAA. Residues 130-161 are Extracellular-facing; the sequence is AELLYLAYNGDKEVTWSEACGVFGSFCRQART. The helical transmembrane segment at 162–182 threads the bilayer; the sequence is SVAITFGTVLCFILLSLISSY. The Cytoplasmic segment spans residues 183–208; the sequence is RLFSAYEAPPSSALGSKGVEIAAYPR.

The protein belongs to the Casparian strip membrane proteins (CASP) family. Homodimer and heterodimers.

The protein resides in the cell membrane. In Sorghum bicolor (Sorghum), this protein is CASP-like protein 2A1.